The following is a 544-amino-acid chain: Chaperonin GroEL (544 aa).

ATP is bound by residues 29–32 (TLGP), 86–90 (DGTTT), Gly413, 476–478 (NAA), and Asp492.

It belongs to the chaperonin (HSP60) family. As to quaternary structure, forms a cylinder of 14 subunits composed of two heptameric rings stacked back-to-back. Interacts with the co-chaperonin GroES.

The protein resides in the cytoplasm. The catalysed reaction is ATP + H2O + a folded polypeptide = ADP + phosphate + an unfolded polypeptide.. Its function is as follows. Together with its co-chaperonin GroES, plays an essential role in assisting protein folding. The GroEL-GroES system forms a nano-cage that allows encapsulation of the non-native substrate proteins and provides a physical environment optimized to promote and accelerate protein folding. In Bacillus thuringiensis (strain Al Hakam), this protein is Chaperonin GroEL.